Consider the following 294-residue polypeptide: GTP cyclohydrolase FolE2 (294 aa).

It belongs to the GTP cyclohydrolase IV family.

The catalysed reaction is GTP + H2O = 7,8-dihydroneopterin 3'-triphosphate + formate + H(+). It functions in the pathway cofactor biosynthesis; 7,8-dihydroneopterin triphosphate biosynthesis; 7,8-dihydroneopterin triphosphate from GTP: step 1/1. Its function is as follows. Converts GTP to 7,8-dihydroneopterin triphosphate. The chain is GTP cyclohydrolase FolE2 from Acinetobacter baylyi (strain ATCC 33305 / BD413 / ADP1).